The sequence spans 51 residues: Large ribosomal subunit protein eL39 (51 aa).

This sequence belongs to the eukaryotic ribosomal protein eL39 family.

The polypeptide is Large ribosomal subunit protein eL39 (rpl39e) (Aeropyrum pernix (strain ATCC 700893 / DSM 11879 / JCM 9820 / NBRC 100138 / K1)).